The primary structure comprises 746 residues: Probable ubiquitin carboxyl-terminal hydrolase MINDY-4 (746 aa).

Disordered regions lie at residues 123–179, 198–254, and 319–342; these read DDET…SEGE, MALG…IKGE, and GKGA…FSNM. Polar residues-rich tracts occupy residues 141-152 and 165-174; these read YRSQNDLQFNKS and TEAGVTSTGV. The Nucleophile role is filled by Cys-448. His-666 acts as the Proton acceptor in catalysis.

Belongs to the MINDY deubiquitinase family. FAM188 subfamily.

It catalyses the reaction Thiol-dependent hydrolysis of ester, thioester, amide, peptide and isopeptide bonds formed by the C-terminal Gly of ubiquitin (a 76-residue protein attached to proteins as an intracellular targeting signal).. In terms of biological role, probable hydrolase that can remove 'Lys-48'-linked conjugated ubiquitin from proteins. This Xenopus tropicalis (Western clawed frog) protein is Probable ubiquitin carboxyl-terminal hydrolase MINDY-4 (mindy4).